The chain runs to 185 residues: Ribosome-recycling factor (185 aa).

Belongs to the RRF family.

The protein resides in the cytoplasm. Its function is as follows. Responsible for the release of ribosomes from messenger RNA at the termination of protein biosynthesis. May increase the efficiency of translation by recycling ribosomes from one round of translation to another. This is Ribosome-recycling factor from Kocuria rhizophila (strain ATCC 9341 / DSM 348 / NBRC 103217 / DC2201).